A 172-amino-acid chain; its full sequence is Translation initiation factor IF-3 (172 aa).

The protein belongs to the IF-3 family. In terms of assembly, monomer.

It localises to the cytoplasm. Functionally, IF-3 binds to the 30S ribosomal subunit and shifts the equilibrium between 70S ribosomes and their 50S and 30S subunits in favor of the free subunits, thus enhancing the availability of 30S subunits on which protein synthesis initiation begins. The sequence is that of Translation initiation factor IF-3 from Geobacter metallireducens (strain ATCC 53774 / DSM 7210 / GS-15).